The chain runs to 298 residues: Hydroxymethylglutaryl-CoA lyase, mitochondrial (298 aa).

Positions 6–273 (VKVVEVGPRD…HTGVDLQKLM (268 aa)) constitute a Pyruvate carboxyltransferase domain. Arg-14 contributes to the substrate binding site. Asp-15 serves as a coordination point for a divalent metal cation. The residue at position 21 (Lys-21) is an N6-acetyllysine. A divalent metal cation contacts are provided by His-206 and His-208. Cys-239 is a catalytic residue. An a divalent metal cation-binding site is contributed by Asn-248. Positions 296 to 298 (CRL) match the Microbody targeting signal motif.

The protein belongs to the HMG-CoA lyase family. Homodimer; disulfide-linked. Can also form homotetramers.

The protein localises to the mitochondrion matrix. Its subcellular location is the peroxisome. It carries out the reaction (3S)-3-hydroxy-3-methylglutaryl-CoA = acetoacetate + acetyl-CoA. It participates in metabolic intermediate metabolism; (S)-3-hydroxy-3-methylglutaryl-CoA degradation; acetoacetate from (S)-3-hydroxy-3-methylglutaryl-CoA: step 1/1. Mitochondrial 3-hydroxy-3-methylglutaryl-CoA lyase that catalyzes a cation-dependent cleavage of (S)-3-hydroxy-3-methylglutaryl-CoA into acetyl-CoA and acetoacetate, a key step in ketogenesis. Terminal step in leucine catabolism. Ketone bodies (beta-hydroxybutyrate, acetoacetate and acetone) are essential as an alternative source of energy to glucose, as lipid precursors and as regulators of metabolism. The protein is Hydroxymethylglutaryl-CoA lyase, mitochondrial (HMGCL) of Gallus gallus (Chicken).